A 105-amino-acid chain; its full sequence is Large ribosomal subunit protein uL24 (105 aa).

The protein belongs to the universal ribosomal protein uL24 family. Part of the 50S ribosomal subunit.

Functionally, one of two assembly initiator proteins, it binds directly to the 5'-end of the 23S rRNA, where it nucleates assembly of the 50S subunit. Its function is as follows. One of the proteins that surrounds the polypeptide exit tunnel on the outside of the subunit. The chain is Large ribosomal subunit protein uL24 from Azoarcus sp. (strain BH72).